The primary structure comprises 131 residues: MRHYEIVFMVHPDQSEQVPGMIERYSATITGAEGTIHRLEDWGRRQLAYPINKLHKAHYVLLNVEAPQEAIDELETNFRFNDAVIRSMVMRVKHAVTEASPMVKAKDERRERREDFANETSDDADAGDSEE.

The disordered stretch occupies residues 100–131 (SPMVKAKDERRERREDFANETSDDADAGDSEE). A compositionally biased stretch (basic and acidic residues) spans 104–116 (KAKDERRERREDF). Residues 120–131 (TSDDADAGDSEE) show a composition bias toward acidic residues.

This sequence belongs to the bacterial ribosomal protein bS6 family.

In terms of biological role, binds together with bS18 to 16S ribosomal RNA. In Erwinia tasmaniensis (strain DSM 17950 / CFBP 7177 / CIP 109463 / NCPPB 4357 / Et1/99), this protein is Small ribosomal subunit protein bS6.